A 450-amino-acid chain; its full sequence is Tubulin alpha-6 chain (450 aa).

Residues Gln11, Glu71, Gly144, Thr145, Thr179, Asn206, and Asn228 each contribute to the GTP site. A Mg(2+)-binding site is contributed by Glu71. Glu254 is an active-site residue.

Belongs to the tubulin family. In terms of assembly, dimer of alpha and beta chains. A typical microtubule is a hollow water-filled tube with an outer diameter of 25 nm and an inner diameter of 15 nM. Alpha-beta heterodimers associate head-to-tail to form protofilaments running lengthwise along the microtubule wall with the beta-tubulin subunit facing the microtubule plus end conferring a structural polarity. Microtubules usually have 13 protofilaments but different protofilament numbers can be found in some organisms and specialized cells. Mg(2+) is required as a cofactor. Post-translationally, undergoes a tyrosination/detyrosination cycle, the cyclic removal and re-addition of a C-terminal tyrosine residue by the enzymes tubulin tyrosine carboxypeptidase (TTCP) and tubulin tyrosine ligase (TTL), respectively.

It localises to the cytoplasm. The protein localises to the cytoskeleton. The enzyme catalyses GTP + H2O = GDP + phosphate + H(+). Tubulin is the major constituent of microtubules, a cylinder consisting of laterally associated linear protofilaments composed of alpha- and beta-tubulin heterodimers. Microtubules grow by the addition of GTP-tubulin dimers to the microtubule end, where a stabilizing cap forms. Below the cap, tubulin dimers are in GDP-bound state, owing to GTPase activity of alpha-tubulin. The protein is Tubulin alpha-6 chain (TUBA6) of Zea mays (Maize).